The sequence spans 432 residues: C(50) beta-cyclic carotenoids biosynthesis protein LbtBC (432 aa).

Residues 1–140 (MTSLYTTLNL…DDDEVRTPER (140 aa)) are beta-cyclase. Helical transmembrane passes span 4–24 (LYTT…LLAA), 36–56 (LIGV…FDNI), and 83–103 (FAYA…LTAS). The interval 111–140 (GSPTVSGRGDALLTRAPEPGDDDEVRTPER) is disordered. An elongase/hydratase region spans residues 141–432 (PGTPGLLTTL…IVLWSVLVWS (292 aa)). 7 consecutive transmembrane segments (helical) span residues 170-190 (YFLA…FFLV), 252-272 (ESSL…AKGL), 277-297 (IPFL…IVGW), 299-319 (IAGA…MLWG), 350-370 (AAVW…LAAA), 374-394 (ASGA…YVGV), and 409-429 (FLVL…WSVL).

The protein belongs to the UbiA prenyltransferase family. As to quaternary structure, may form a complex with LbtA.

Its subcellular location is the cell membrane. The enzyme catalyses all-trans-lycopene + dimethylallyl diphosphate + H2O = dihydroisopentenyldehydrorhodopin + diphosphate. The catalysed reaction is isopentenyldehydrorhodopin + dimethylallyl diphosphate + H2O = dihydrobisanhydrobacterioruberin + diphosphate. It participates in carotenoid biosynthesis. Its function is as follows. Involved in the biosynthesis of C(50) beta-cyclic carotenoids. The elongase/hydratase domain catalyzes the elongation of lycopene by attaching a C(5) isoprene unit at C-2, as well as the hydroxylation of the previous end of the molecule. The enzyme acts at both ends of the substrate, and catalyzes the conversion of lycopene to the C(45) intermediate dihydroisopentenyldehydrorhodopin (DH-IDR) and the conversion of isopentenyldehydrorhodopin (IDR) to the C(50) carotenoid dihydrobisanhydrobacterioruberin (DH-BABR). The beta-cyclase domain may produce the C(50) beta-cyclic carotenoid C.p.450 from the C(50) carotenoid dihydrobisanhydrobacterioruberin (DH-BABR). The polypeptide is C(50) beta-cyclic carotenoids biosynthesis protein LbtBC (Dietzia sp. (strain CQ4)).